The primary structure comprises 237 residues: Orotidine 5'-phosphate decarboxylase (237 aa).

Substrate is bound by residues D17, K39, 66-75 (DLKLHDIGNT), T121, R182, Q191, G211, and R212. The active-site Proton donor is the K68.

This sequence belongs to the OMP decarboxylase family. Type 1 subfamily. In terms of assembly, homodimer.

It carries out the reaction orotidine 5'-phosphate + H(+) = UMP + CO2. It functions in the pathway pyrimidine metabolism; UMP biosynthesis via de novo pathway; UMP from orotate: step 2/2. Catalyzes the decarboxylation of orotidine 5'-monophosphate (OMP) to uridine 5'-monophosphate (UMP). This is Orotidine 5'-phosphate decarboxylase from Rhodopseudomonas palustris (strain ATCC BAA-98 / CGA009).